Reading from the N-terminus, the 141-residue chain is Glutamyl-tRNA(Gln) amidotransferase subunit C, chloroplastic/mitochondrial (141 aa).

Belongs to the GatC family. Subunit of the heterotrimeric GatCAB amidotransferase (AdT) complex, composed of A, B and C subunits.

It is found in the mitochondrion. The protein localises to the plastid. The protein resides in the chloroplast. The enzyme catalyses L-glutamyl-tRNA(Gln) + L-glutamine + ATP + H2O = L-glutaminyl-tRNA(Gln) + L-glutamate + ADP + phosphate + H(+). In terms of biological role, allows the formation of correctly charged Gln-tRNA(Gln) through the transamidation of misacylated Glu-tRNA(Gln) in chloroplasts and mitochondria. The reaction takes place in the presence of glutamine and ATP through an activated gamma-phospho-Glu-tRNA(Gln). The protein is Glutamyl-tRNA(Gln) amidotransferase subunit C, chloroplastic/mitochondrial of Populus trichocarpa (Western balsam poplar).